Consider the following 1055-residue polypeptide: Elongation factor 3 (1055 aa).

Residue V45 coordinates ADP. HEAT repeat units lie at residues 48–86, 96–133, 134–172, 176–213, 218–255, 257–290, and 296–337; these read FTQIGFNDAIVKALNDKKSQSAREGACEVISTLCENGAA, SAENTPFPALLEAFADKVAAVKTAAIAAVKAIVQSMNP, WASFVLLPALLNLIRTSGKWQIKAGSLEILQQLITSAPF, EAMPDLVPVLAEAVWDTKSDVKKAAKATLEKAVSLVEN, KFVPALVKSLLNPIEEVPKTISLLSATTFVSEVTAPTI, LIAPLLIRGLDERPTATKRKVCVIADNMSKLVDS, and PFLP…VPAE. ABC transporter domains lie at 447 to 659 and 687 to 1004; these read CNIE…SYYQ and LKMR…KKAA. 4 residues coordinate ADP: N723, E933, N936, and H962. The segment at 1024 to 1055 is disordered; sequence EKKLSAADKRKAKKDRMARRKRGEEVFSDEEL. The segment covering 1033–1044 has biased composition (basic residues); it reads RKAKKDRMARRK.

Belongs to the ABC transporter superfamily. ABCF family. EF3 subfamily. Interacts with CCH1; the interaction is direct and required for the localization of CCH1 to the cell membrane.

The protein localises to the cytoplasm. It is found in the cytosol. It carries out the reaction ATP + H2O = ADP + phosphate + H(+). The protein operates within protein biosynthesis; polypeptide chain elongation. Its function is as follows. Ribosome-dependent ATPase that functions in cytoplasmic translation elongation. Required for the ATP-dependent release of deacylated tRNA from the ribosomal E-site during protein biosynthesis. Stimulates the eEF1A-dependent binding of aminoacyl-tRNA to the ribosomal A-site, which has reduced affinity for tRNA as long as the E-site is occupied. Assists translation termination by stimulating the release of nascent protein from the ribosome by release factors. Appears to localize calcium-channel protein CCH1 to the plasma membrane. This is Elongation factor 3 from Cryptococcus neoformans var. grubii serotype A (strain H99 / ATCC 208821 / CBS 10515 / FGSC 9487) (Filobasidiella neoformans var. grubii).